The primary structure comprises 781 residues: MATQADLMELDMAMEPDRKAAVSHWQQQSYLDSGIHSGATTTAPSLSGKGNPEEEDVDTSQVLYEWEQGFSQSFTQEQVADIDGQYAMTRAQRVRAAMFPETLDEGMQIPSTQFDAAHPTNVQRLAEPSQMLKHAVVNLINYQDDAELATRAIPELTKLLNDEDQVVVNKAAVMVHQLSKKEASRHAIMRSPQMVSAIVRTMQNTNDVETARCTAGTLHNLSHHREGLLAIFKSGGIPALVKMLGSPVDSVLFYAITTLHNLLLHQEGAKMAVRLAGGLQKMVALLNKTNVKFLAITTDCLQILAYGNQESKLIILASGGPQALVNIMRTYTYEKLLWTTSRVLKVLSVCSSNKPAIVEAGGMQALGLHLTDPSQRLVQNCLWTLRNLSDAATKQEGMEGLLGTLVQLLGSDDINVVTCAAGILSNLTCNNYKNKMMVCQVGGIEALVRTVLRAGDREDITEPAICALRHLTSRHQEAEMAQNAVRLHYGLPVVVKLLHPPSHWPLIKATVGLIRNLALCPANHAPLREQGAIPRLVQLLVRAHQDTQRRTSMGGTQQQFVEGVRMEEIVEGCTGALHILARDVHNRIVIRGLNTIPLFVQLLYSPIENIQRVAAGVLCELAQDKEAAEAIEAEGATAPLTELLHSRNEGVATYAAAVLFRMSEDKPQDYKKRLSVELTSSLFRTEPMAWNETADLGLDIGAQGEALGYRQDDPSYRSFHSGGYGQDALGMDPMMEHEMGGHHPGADYPVDGLPDLGHAQDLMDGLPPGDSNQLAWFDTDL.

Position 2 is an N-acetylalanine (alanine 2). Positions 2–23 (ATQADLMELDMAMEPDRKAAVS) are interaction with VCL. A Phosphoserine; by GSK3-beta; alternate modification is found at serine 23. Serine 23 is a glycosylation site (O-linked (GlcNAc) serine; alternate). The residue at position 29 (serine 29) is a Phosphoserine; by GSK3-beta. Phosphoserine; by GSK3-beta and HIPK2 is present on residues serine 33 and serine 37. The segment at 34–57 (GIHSGATTTAPSLSGKGNPEEEDV) is disordered. Threonine 41 carries the post-translational modification Phosphothreonine; by GSK3-beta. Serine 45 bears the Phosphoserine mark. Position 49 is an N6-acetyllysine (lysine 49). Tyrosine 64 is subject to Phosphotyrosine; by PTK6. Tyrosine 142 carries the post-translational modification Phosphotyrosine; by FYN and PTK6. 12 ARM repeats span residues 151–191 (RAIP…IMRS), 193–234 (QMVS…IFKS), 235–276 (GGIP…VRLA), 277–318 (GGLQ…ILAS), 319–360 (GGPQ…IVEA), 361–389 (GGMQ…RNLS), 400–441 (GLLG…VCQV), 442–484 (GGIE…AQNA), 489–530 (YGLP…LREQ), 531–571 (GAIP…EIVE), 594–636 (NTIP…AEGA), and 637–666 (TAPL…SEDK). The interaction with BCL9 stretch occupies residues 156-178 (LTKLLNDEDQVVVNKAAVMVHQL). Serine 191 bears the Phosphoserine mark. The residue at position 246 (serine 246) is a Phosphoserine; by CDK5. A phosphotyrosine mark is found at tyrosine 331 and tyrosine 333. Serine 552 bears the Phosphoserine; by AMPK mark. Threonine 556 carries the phosphothreonine modification. Position 619 is an S-nitrosocysteine (cysteine 619). A Phosphoserine modification is found at serine 675. Residues 720–781 (HSGGYGQDAL…NQLAWFDTDL (62 aa)) are disordered. Residues 734-745 (MMEHEMGGHHPG) are compositionally biased toward basic and acidic residues. Residues 772-781 (NQLAWFDTDL) form an interaction with SCRIB region.

It belongs to the beta-catenin family. As to quaternary structure, two separate complex-associated pools are found in the cytoplasm. The majority is present as component of an E-cadherin/ catenin adhesion complex composed of at least E-cadherin/CDH1 and beta-catenin/CTNNB1, and possibly alpha-catenin/CTNNA1; the complex is located to adherens junctions. The stable association of CTNNA1 is controversial as CTNNA1 was shown not to bind to F-actin when assembled in the complex. Alternatively, the CTNNA1-containing complex may be linked to F-actin by other proteins such as LIMA1. Binds NHERF1. Interacts with PTPRU (via the cytoplasmic juxtamembrane domain) and with EMD. Interacts with SESTD1 and TRPC4. Interacts with CAV1. Interacts with PTPRJ. Interacts with PKT7. Interacts with FAT1 (via the cytoplasmic domain). Interacts with CDK2, NDRG2 and NANOS1. Interacts with NEK2 and CDK5. Interacts with CARM1, CXADR, PCDH11Y and PTK6. Interacts with RAPGEF2. Interacts with SOX7; this interaction may lead to proteasomal degradation of active CTNNB1 and thus inhibition of Wnt/beta-catenin-stimulated transcription. Identified in a complex with HINT1 and MITF. Interacts with FHIT. Interacts with FERMT2. Identified in a complex with TCF4 and FERMT2. Another cytoplasmic pool is part of a large complex containing AXIN1, AXIN2, APC, CSNK1A1 and GSK3B that promotes phosphorylation on N-terminal Ser and Thr residues and ubiquitination of CTNNB1 via BTRC and its subsequent degradation by the proteasome. Wnt-dependent activation of DVL antagonizes the action of GSK3B. When GSK3B activity is inhibited the complex dissociates, CTNNB1 is dephosphorylated and is no longer targeted for destruction. The stabilized protein translocates to the nucleus, where it binds TCF/LEF-1 family members, BCL9, BCL9L and possibly also RUVBL1 and CHD8. Interacts with TAX1BP3 (via the PDZ domain); this interaction inhibits the transcriptional activity of CTNNB1. Interacts with AJAP1, BAIAP1 and CTNNA3. Interacts with TRPV4; the TRPV4 and CTNNB1 complex can interact with CDH1. Interacts with VCL. The CTNNB1 and TCF4 complex interacts with PML. Interacts with XIRP1. Binds CTNNBIP and EP300. CTNNB1 forms a ternary complex with LEF1 and EP300 that is disrupted by CTNNBIP1 binding. Interacts directly with AXIN1; the interaction is regulated by CDK2 phosphorylation of AXIN1. Interacts with GLIS2. Interacts with SCRIB. Interacts with TNIK and TCF7L2. Interacts with SLC30A9. Interacts with RORA. May interact with P-cadherin/CDH3. Interacts with RNF220. Interacts with CTNND2. Interacts (via the C-terminal region) with CBY1. The complex composed, at least, of APC, CTNNB1 and GSK3B interacts with JPT1; the interaction requires the inactive form of GSK3B (phosphorylated at 'Ser-9'). Interacts with DLG5. Interacts with FAM53B; promoting translocation to the nucleus. Interacts with TMEM170B. Interacts with AHI1. Interacts with GID8. Component of an cadherin:catenin adhesion complex composed of at least of CDH26, beta-catenin/CTNNB1, alpha-catenin/CTNNA1 and p120 catenin/CTNND1. Forms a complex comprising APPL1, RUVBL2, APPL2, HDAC1 and HDAC2. Interacts with IRF2BPL; mediates the ubiquitination and degradation of CTNNB1. Interacts with AMFR. Interacts with LMBR1L. Interacts with SOX30; prevents interaction of CTNNB1 with TCF7L2/TCF4 and leads to inhibition of Wnt signaling. Interacts with SOX9; inhibiting CTNNB1 activity by competing with the binding sites of TCF/LEF within CTNNB1, thereby inhibiting the Wnt signaling. Interacts with SPN/CD43 cytoplasmic tail. Interacts (when phosphorylated at Tyr-333) with isoform M2 of PKM (PKM2); promoting transcription activation. Interacts with PKP2 (via HEAD domain). Interacts with CDH1. Interacts (when unphosphorylated) with FLYWCH1, perhaps preventing interaction of CTNNB1 with TCF4, and thereby regulating transcription activation; phosphorylation of CTNNB1 may inhibit the interaction. Interacts (via the central armadillo domains) with probable transcriptional regulator ADNP (via N-terminal region); interaction is direct and stabilizes CTNNB1 by modulating its phosphorylation by glycogen synthase kinase-3 beta GSK3B. Interacts with NR5A2. Interacts with DSG2; the interaction promotes localization of CTNNB1 at cell junctions thus reducing its nuclear localization and subsequent transcription of CTNNB1/TCF-target genes. Phosphorylation at Ser-552 by AMPK promotes stabilization of the protein, enhancing TCF/LEF-mediated transcription. Phosphorylation by GSK3B requires prior phosphorylation of Ser-45 by another kinase. Phosphorylation proceeds then from Thr-41 to Ser-37 and Ser-33. Phosphorylated by NEK2. EGF stimulates tyrosine phosphorylation. Phosphorylated on Ser-33 and Ser-37 by HIPK2 and GSK3B, this phosphorylation triggers proteasomal degradation. Phosphorylation on Ser-191 and Ser-246 by CDK5. Phosphorylation by CDK2 regulates insulin internalization. Phosphorylation by PTK6 at Tyr-64, Tyr-142, Tyr-331 and/or Tyr-333 with the predominant site at Tyr-64 is not essential for inhibition of transcriptional activity. Phosphorylation by SRC at Tyr-333 promotes interaction with isoform M2 of PKM (PKM2); promoting transcription activation. In terms of processing, ubiquitinated by the SCF(BTRC) E3 ligase complex when phosphorylated by GSK3B, leading to its degradation. Ubiquitinated by a E3 ubiquitin ligase complex containing UBE2D1, SIAH1, CACYBP/SIP, SKP1, APC and TBL1X, leading to its subsequent proteasomal degradation. Ubiquitinated and degraded following interaction with SOX9. Ubiquitinated via 'Lys-11'- and 'Lys-29'-linked ubiquitin chains by UBR5, leading to its stabilization. Post-translationally, S-nitrosylation at Cys-619 within adherens junctions promotes VEGF-induced, NO-dependent endothelial cell permeability by disrupting interaction with E-cadherin, thus mediating disassembly adherens junctions. O-glycosylation at Ser-23 decreases nuclear localization and transcriptional activity, and increases localization to the plasma membrane and interaction with E-cadherin CDH1. In terms of processing, deacetylated at Lys-49 by SIRT1. As to expression, expressed in cerebellar granule neurons (at protein level). Expressed in the intestinal epithelium (at protein level). Abundantly expressed in the tooth, skin, lung, kidney, eye and brain with weak expression in the liver and heart.

The protein localises to the cytoplasm. It localises to the nucleus. The protein resides in the cytoskeleton. Its subcellular location is the cell junction. It is found in the adherens junction. The protein localises to the cell membrane. It localises to the microtubule organizing center. The protein resides in the centrosome. Its subcellular location is the spindle pole. It is found in the synapse. The protein localises to the cilium basal body. In terms of biological role, key downstream component of the canonical Wnt signaling pathway. In the absence of Wnt, forms a complex with AXIN1, AXIN2, APC, CSNK1A1 and GSK3B that promotes phosphorylation on N-terminal Ser and Thr residues and ubiquitination of CTNNB1 via BTRC and its subsequent degradation by the proteasome. In the presence of Wnt ligand, CTNNB1 is not ubiquitinated and accumulates in the nucleus, where it acts as a coactivator for transcription factors of the TCF/LEF family, leading to activate Wnt responsive genes. Also acts as a coactivator for other transcription factors, such as NR5A2. Promotes epithelial to mesenchymal transition/mesenchymal to epithelial transition (EMT/MET) via driving transcription of CTNNB1/TCF-target genes. Involved in the regulation of cell adhesion, as component of an E-cadherin:catenin adhesion complex. Acts as a negative regulator of centrosome cohesion. Involved in the CDK2/PTPN6/CTNNB1/CEACAM1 pathway of insulin internalization. Blocks anoikis of malignant kidney and intestinal epithelial cells and promotes their anchorage-independent growth by down-regulating DAPK2. Disrupts PML function and PML-NB formation by inhibiting RANBP2-mediated sumoylation of PML. Promotes neurogenesis by maintaining sympathetic neuroblasts within the cell cycle. Involved in chondrocyte differentiation via interaction with SOX9: SOX9-binding competes with the binding sites of TCF/LEF within CTNNB1, thereby inhibiting the Wnt signaling. Acts as a positive regulator of odontoblast differentiation during mesenchymal tooth germ formation, via promoting the transcription of differentiation factors such as LEF1, BMP2 and BMP4. Activity is repressed in a MSX1-mediated manner at the bell stage of mesenchymal tooth germ formation which prevents premature differentiation of odontoblasts. This is Catenin beta-1 from Mus musculus (Mouse).